The primary structure comprises 1405 residues: DNA-directed RNA polymerase subunit beta' (1405 aa).

Cysteine 70, cysteine 72, cysteine 85, and cysteine 88 together coordinate Zn(2+). 3 residues coordinate Mg(2+): aspartate 460, aspartate 462, and aspartate 464. Zn(2+)-binding residues include cysteine 814, cysteine 888, cysteine 895, and cysteine 898.

It belongs to the RNA polymerase beta' chain family. In terms of assembly, the RNAP catalytic core consists of 2 alpha, 1 beta, 1 beta' and 1 omega subunit. When a sigma factor is associated with the core the holoenzyme is formed, which can initiate transcription. It depends on Mg(2+) as a cofactor. Zn(2+) serves as cofactor.

The catalysed reaction is RNA(n) + a ribonucleoside 5'-triphosphate = RNA(n+1) + diphosphate. Functionally, DNA-dependent RNA polymerase catalyzes the transcription of DNA into RNA using the four ribonucleoside triphosphates as substrates. This Wigglesworthia glossinidia brevipalpis protein is DNA-directed RNA polymerase subunit beta'.